The primary structure comprises 241 residues: Venom nerve growth factor (241 aa).

An N-terminal signal peptide occupies residues 1-18 (MSMLCYTLIIAFLIGIWA). Positions 19–122 (APKSEDNVPL…SLNRNIRAKR (104 aa)) are excised as a propeptide. 3 cysteine pairs are disulfide-bonded: C136-C201, C179-C229, and C189-C231. N-linked (GlcNAc...) asparagine glycosylation is present at N145.

The protein belongs to the NGF-beta family. In terms of assembly, homodimer; non-covalently linked. In terms of tissue distribution, expressed by the venom gland.

The protein localises to the secreted. In terms of biological role, nerve growth factor is important for the development and maintenance of the sympathetic and sensory nervous systems. It stimulates division and differentiation of sympathetic and embryonic sensory neurons as well as basal forebrain cholinergic neurons in the brain. Its relevance in the snake venom is not clear. However, it has been shown to inhibit metalloproteinase-dependent proteolysis of platelet glycoprotein Ib alpha, suggesting a metalloproteinase inhibition to prevent metalloprotease autodigestion and/or protection against prey proteases. Binds a lipid between the two protein chains in the homodimer. The lipid-bound form promotes histamine relase from mouse mast cells, contrary to the lipid-free form. This is Venom nerve growth factor from Crotalus durissus terrificus (South American rattlesnake).